The primary structure comprises 336 residues: Eukaryotic translation initiation factor 3 subunit H (336 aa).

In terms of domain architecture, MPN spans 21–154 (VQCDGLAAMK…LKAYRLTPQA (134 aa)).

It belongs to the eIF-3 subunit H family. In terms of assembly, component of the eukaryotic translation initiation factor 3 (eIF-3) complex.

The protein resides in the cytoplasm. Functionally, component of the eukaryotic translation initiation factor 3 (eIF-3) complex, which is involved in protein synthesis of a specialized repertoire of mRNAs and, together with other initiation factors, stimulates binding of mRNA and methionyl-tRNAi to the 40S ribosome. The eIF-3 complex specifically targets and initiates translation of a subset of mRNAs involved in cell proliferation. The sequence is that of Eukaryotic translation initiation factor 3 subunit H from Culex quinquefasciatus (Southern house mosquito).